Here is a 274-residue protein sequence, read N- to C-terminus: tRNA-cytidine(32) 2-sulfurtransferase (274 aa).

The PP-loop motif signature appears at 40–45; sequence SGGKDS. [4Fe-4S] cluster-binding residues include Cys115, Cys118, and Cys206.

The protein belongs to the TtcA family. As to quaternary structure, homodimer. Mg(2+) serves as cofactor. The cofactor is [4Fe-4S] cluster.

It is found in the cytoplasm. The catalysed reaction is cytidine(32) in tRNA + S-sulfanyl-L-cysteinyl-[cysteine desulfurase] + AH2 + ATP = 2-thiocytidine(32) in tRNA + L-cysteinyl-[cysteine desulfurase] + A + AMP + diphosphate + H(+). The protein operates within tRNA modification. Its function is as follows. Catalyzes the ATP-dependent 2-thiolation of cytidine in position 32 of tRNA, to form 2-thiocytidine (s(2)C32). The sulfur atoms are provided by the cysteine/cysteine desulfurase (IscS) system. This Pseudomonas putida (strain GB-1) protein is tRNA-cytidine(32) 2-sulfurtransferase.